A 497-amino-acid polypeptide reads, in one-letter code: NAD(P)H-quinone oxidoreductase chain 4, chloroplastic (497 aa).

A run of 13 helical transmembrane segments spans residues 4–24 (LPWL…IPLF), 35–55 (YTLG…CCHF), 87–107 (MGLI…AWPV), 113–133 (LFHF…ASQD), 134–154 (ILLF…LLSI), 167–187 (FILY…TIGL), 207–227 (IALE…KLPI), 242–262 (HYST…YGLI), 274–294 (AIFA…ASLI), 313–333 (MGFV…GAIL), 386–406 (LALP…GIVI), 416–436 (IVIT…LLSM), and 462–482 (IFIS…PNLV).

The protein belongs to the complex I subunit 4 family.

It localises to the plastid. Its subcellular location is the chloroplast thylakoid membrane. It carries out the reaction a plastoquinone + NADH + (n+1) H(+)(in) = a plastoquinol + NAD(+) + n H(+)(out). The catalysed reaction is a plastoquinone + NADPH + (n+1) H(+)(in) = a plastoquinol + NADP(+) + n H(+)(out). The polypeptide is NAD(P)H-quinone oxidoreductase chain 4, chloroplastic (Angiopteris evecta (Mule's foot fern)).